Reading from the N-terminus, the 364-residue chain is Pre-mRNA-splicing factor SLT11 (364 aa).

Residues 331-364 form a disordered region; that stretch reads KSTDNAKNDKKKTSKKVHKDRSKKSKPRANKLTI. Basic residues predominate over residues 339-364; sequence DKKKTSKKVHKDRSKKSKPRANKLTI.

It belongs to the SLT11 family. Belongs to the CWC complex (or CEF1-associated complex), a spliceosome subcomplex composed of the U2, U5 and U6 snRNAs and at least BUD13, BUD31, BRR2, CDC40, CEF1, CLF1, CUS1, CWC2, CWC15, CWC21, CWC22, CWC23, CWC24, CWC25, CWC27, ECM2, HSH155, IST3, ISY1, LEA1, MSL1, NTC20, PRP8, PRP9, PRP11, PRP19, PRP21, PRP22, PRP45, PRP46, SLU7, SMB1, SMD1, SMD2, SMD3, SMX2, SMX3, SNT309, SNU114, SPP2, SYF1, SYF2, RSE1 and YJU2. Interacts with SLU7.

Its subcellular location is the nucleus. In terms of biological role, involved in pre-mRNA splicing. Facilitates the cooperative formation of U2/U6 helix II in association with stem II in the spliceosome. Binds to RNA. This is Pre-mRNA-splicing factor SLT11 (ECM2) from Saccharomyces cerevisiae (strain ATCC 204508 / S288c) (Baker's yeast).